Here is a 670-residue protein sequence, read N- to C-terminus: Pescadillo homolog (670 aa).

Positions 292 to 321 form a coiled coil; sequence GANQAQAKVKEAESKRSLMEEELLKVRELF. The 87-residue stretch at 316–402 folds into the BRCT domain; it reads KVRELFRGLT…QMLPVTGYRI (87 aa). Residues 643-670 are disordered; sequence RQRAEAKGKKLKEKKADNPYKKLPKWVQ. A compositionally biased stretch (basic and acidic residues) spans 644-662; that stretch reads QRAEAKGKKLKEKKADNPY.

It belongs to the pescadillo family.

It is found in the nucleus. The protein localises to the nucleolus. Its subcellular location is the nucleoplasm. Functionally, required for maturation of ribosomal RNAs and formation of the large ribosomal subunit. The protein is Pescadillo homolog of Leishmania braziliensis.